We begin with the raw amino-acid sequence, 353 residues long: MDYKSSLIQDGNPMENLEKQLICPICLEMFTKPVVILPCQHNLCRKCANDIFQAANPYWTSRGSSVSMSGGRFRCPTCRHEVIMDRHGVYGLQRNLLVENIIDIYKQECSSRPLQKGSHPMCKEHEDEKINIYCLTCEVPTCSMCKVFGIHKACEVAPLQSVFQGQKTELNNCISMLVAGNDRVQTIITQLEDSRRVTKENSHQVKEELSQKFDTLYAILDEKKSELLQRITQEQEKKLSFIEALIQQYQEQLDKSTKLVETAIQSLDEPGGATFLLTAKQLIKSIVEASKGCQLGKTEQGFENMDFFTLDLEHIADALRAIDFGTDEEEEEFIEEEDQEEEESTEGKEEGHQ.

Residues 23-79 (CPICLEMFTKPVVILPCQHNLCRKCANDIFQAANPYWTSRGSSVSMSGGRFRCPTCR) form an RING-type zinc finger. Positions 74–218 (RCPTCRHEVI…LSQKFDTLYA (145 aa)) are interaction with TTN. A B box-type zinc finger spans residues 117 to 159 (GSHPMCKEHEDEKINIYCLTCEVPTCSMCKVFGIHKACEVAPL). Zn(2+) contacts are provided by cysteine 122, histidine 125, cysteine 145, and histidine 151. Residues 207–269 (EELSQKFDTL…VETAIQSLDE (63 aa)) adopt a coiled-coil conformation. Residues 267–325 (LDEPGGATFLLTAKQLIKSIVEASKGCQLGKTEQGFENMDFFTLDLEHIADALRAIDFG) form the COS domain. A compositionally biased stretch (acidic residues) spans 326–344 (TDEEEEEFIEEEDQEEEES). The interval 326–353 (TDEEEEEFIEEEDQEEEESTEGKEEGHQ) is disordered.

In terms of assembly, homodimer. Homooligomer and heterooligomer. Interacts with SUMO2, titin/TTN and GMEB1. Interacts with TRIM54 and probably with TRIM55 and TNNI3. Forms a ternary complex with RACK1 and PRKCE. Interacts with CKM. As to expression, muscle specific. Selectively expressed in heart and skeletal muscle. Also expressed in the iris.

It is found in the cytoplasm. Its subcellular location is the nucleus. It localises to the myofibril. The protein resides in the sarcomere. The protein localises to the m line. It is found in the z line. It carries out the reaction S-ubiquitinyl-[E2 ubiquitin-conjugating enzyme]-L-cysteine + [acceptor protein]-L-lysine = [E2 ubiquitin-conjugating enzyme]-L-cysteine + N(6)-ubiquitinyl-[acceptor protein]-L-lysine.. The protein operates within protein modification; protein ubiquitination. Its function is as follows. E3 ubiquitin ligase. Mediates the ubiquitination and subsequent proteasomal degradation of CKM, GMEB1 and HIBADH. Regulates the proteasomal degradation of muscle proteins under amino acid starvation, where muscle protein is catabolized to provide other organs with amino acids. Inhibits de novo skeletal muscle protein synthesis under amino acid starvation. Regulates proteasomal degradation of cardiac troponin I/TNNI3 and probably of other sarcomeric-associated proteins. May play a role in striated muscle atrophy and hypertrophy by regulating an anti-hypertrophic PKC-mediated signaling pathway. May regulate the organization of myofibrils through TTN in muscle cells. This is E3 ubiquitin-protein ligase TRIM63 (TRIM63) from Homo sapiens (Human).